Here is a 531-residue protein sequence, read N- to C-terminus: 2-isopropylmalate synthase (531 aa).

The Pyruvate carboxyltransferase domain occupies 8–284 (IIIFDTTLRD…LTNIDTKQIY (277 aa)). Residues Asp-17, His-208, His-210, and Asn-244 each contribute to the Mn(2+) site. Residues 408-531 (RVELVQVSCG…TQDKQTEVTA (124 aa)) are regulatory domain.

The protein belongs to the alpha-IPM synthase/homocitrate synthase family. LeuA type 1 subfamily. Homodimer. Mn(2+) is required as a cofactor.

Its subcellular location is the cytoplasm. The catalysed reaction is 3-methyl-2-oxobutanoate + acetyl-CoA + H2O = (2S)-2-isopropylmalate + CoA + H(+). It participates in amino-acid biosynthesis; L-leucine biosynthesis; L-leucine from 3-methyl-2-oxobutanoate: step 1/4. Functionally, catalyzes the condensation of the acetyl group of acetyl-CoA with 3-methyl-2-oxobutanoate (2-ketoisovalerate) to form 3-carboxy-3-hydroxy-4-methylpentanoate (2-isopropylmalate). This chain is 2-isopropylmalate synthase, found in Nostoc sp. (strain PCC 7120 / SAG 25.82 / UTEX 2576).